The primary structure comprises 196 residues: uncharacterized protein (196 aa).

Residues 44–80 (RSVAVPGTEGKKAQNLRQLPAARLTYPTSSSTRPSHA) form a disordered region.

This is an uncharacterized protein from Treponema pallidum (strain Nichols).